The primary structure comprises 772 residues: Heat shock protein 88 (772 aa).

2 disordered regions span residues 496–519 (TAAP…AEEK) and 729–772 (LGKP…DILD). The span at 497–513 (AAPAETPAETPANGEAA) shows a compositional bias: low complexity. Positions 735–772 (KPVEVPKEEPKDTPMESKDAPAEEPVATKDQKMDDILD) are enriched in basic and acidic residues.

The protein belongs to the heat shock protein 70 family.

In terms of biological role, may function in protein folding and assembly, and disassembly of protein complexes. The protein is Heat shock protein 88 (hspH) of Dictyostelium discoideum (Social amoeba).